A 110-amino-acid chain; its full sequence is Co-chaperonin GroES (110 aa).

It belongs to the GroES chaperonin family. Heptamer of 7 subunits arranged in a ring. Interacts with the chaperonin GroEL.

The protein resides in the cytoplasm. Its function is as follows. Together with the chaperonin GroEL, plays an essential role in assisting protein folding. The GroEL-GroES system forms a nano-cage that allows encapsulation of the non-native substrate proteins and provides a physical environment optimized to promote and accelerate protein folding. GroES binds to the apical surface of the GroEL ring, thereby capping the opening of the GroEL channel. The chain is Co-chaperonin GroES from Mycoplasma genitalium (strain ATCC 33530 / DSM 19775 / NCTC 10195 / G37) (Mycoplasmoides genitalium).